A 422-amino-acid polypeptide reads, in one-letter code: Oxysterol-binding protein 7 (422 aa).

Positions 283–313 are disordered; it reads EAAPASSASKKEKKKEKKKAKHSKHTCSPSD. Basic residues predominate over residues 293 to 307; the sequence is KEKKKEKKKAKHSKH. The stretch at 354–384 forms a coiled coil; sequence MQAADQIKKEIEDEQRKRLQITKEEEKKERA. The tract at residues 402–422 is disordered; sequence TLAPVSNSTSSTASDAASGSN. The span at 407–422 shows a compositional bias: low complexity; it reads SNSTSSTASDAASGSN.

Belongs to the OSBP family.

In Dictyostelium discoideum (Social amoeba), this protein is Oxysterol-binding protein 7 (osbG).